The primary structure comprises 329 residues: Glycerol-3-phosphate dehydrogenase [NAD(P)+] (329 aa).

Residues W11, R31, and K105 each contribute to the NADPH site. Sn-glycerol 3-phosphate-binding residues include K105, G135, and T137. A139 serves as a coordination point for NADPH. Residues K190, D243, S253, R254, and N255 each coordinate sn-glycerol 3-phosphate. K190 (proton acceptor) is an active-site residue. Position 254 (R254) interacts with NADPH. NADPH-binding residues include V277 and E279.

This sequence belongs to the NAD-dependent glycerol-3-phosphate dehydrogenase family.

The protein resides in the cytoplasm. The catalysed reaction is sn-glycerol 3-phosphate + NAD(+) = dihydroxyacetone phosphate + NADH + H(+). It catalyses the reaction sn-glycerol 3-phosphate + NADP(+) = dihydroxyacetone phosphate + NADPH + H(+). Its pathway is membrane lipid metabolism; glycerophospholipid metabolism. In terms of biological role, catalyzes the reduction of the glycolytic intermediate dihydroxyacetone phosphate (DHAP) to sn-glycerol 3-phosphate (G3P), the key precursor for phospholipid synthesis. This is Glycerol-3-phosphate dehydrogenase [NAD(P)+] from Maridesulfovibrio salexigens (strain ATCC 14822 / DSM 2638 / NCIMB 8403 / VKM B-1763) (Desulfovibrio salexigens).